Here is a 692-residue protein sequence, read N- to C-terminus: E3 ubiquitin-protein ligase MARCHF7 (692 aa).

The residue at position 1 (methionine 1) is an N-acetylmethionine. Disordered stretches follow at residues methionine 1–serine 165, serine 201–threonine 280, phenylalanine 296–glutamate 343, leucine 360–arginine 425, serine 440–glycine 474, and serine 512–leucine 532. Over residues tyrosine 37 to serine 48 the composition is skewed to basic and acidic residues. 2 stretches are compositionally biased toward polar residues: residues proline 61–glutamine 83 and serine 95–valine 132. A compositionally biased stretch (basic and acidic residues) spans leucine 140–serine 153. The segment covering serine 201 to proline 214 has biased composition (polar residues). The span at serine 215–serine 233 shows a compositional bias: low complexity. Residues serine 235–serine 272 are compositionally biased toward polar residues. Residues phenylalanine 296–serine 305 show a composition bias toward low complexity. Over residues leucine 306–valine 336 the composition is skewed to polar residues. Phosphoserine is present on residues serine 318 and serine 389. The span at alanine 450–serine 462 shows a compositional bias: low complexity. Over residues glycine 516–leucine 532 the composition is skewed to basic and acidic residues. The segment at aspartate 545 to asparagine 615 adopts an RING-CH-type zinc-finger fold. Positions 553, 556, 571, 573, 581, 584, 605, and 608 each coordinate Zn(2+). Threonine 687 is modified (phosphothreonine). A Phosphoserine modification is found at serine 688.

It localises to the cytoplasm. It catalyses the reaction S-ubiquitinyl-[E2 ubiquitin-conjugating enzyme]-L-cysteine + [acceptor protein]-L-lysine = [E2 ubiquitin-conjugating enzyme]-L-cysteine + N(6)-ubiquitinyl-[acceptor protein]-L-lysine.. It functions in the pathway protein modification; protein ubiquitination. Functionally, E3 ubiquitin-protein ligase which may specifically enhance the E2 activity of HIP2. E3 ubiquitin ligases accept ubiquitin from an E2 ubiquitin-conjugating enzyme in the form of a thioester and then directly transfer the ubiquitin to targeted substrates. May be involved in T-cell proliferation by regulating LIF secretion. May play a role in lysosome homeostasis. Promotes 'Lys-6', 'Lys-11' and 'Lys-63'-linked mixed polyubiquitination on ATG14 leading to the inhibition of autophagy by impairing the interaction between ATG14 and STX7. Participates in the dopamine-mediated negative regulation of the NLRP3 inflammasome by promoting its uibiquitination and subsequent degradation. The protein is E3 ubiquitin-protein ligase MARCHF7 (Marchf7) of Rattus norvegicus (Rat).